A 277-amino-acid polypeptide reads, in one-letter code: 3-methyl-2-oxobutanoate hydroxymethyltransferase (277 aa).

Mg(2+) contacts are provided by aspartate 53 and aspartate 96. 3-methyl-2-oxobutanoate-binding positions include 53-54 (DS), aspartate 96, and lysine 126. Residue glutamate 128 participates in Mg(2+) binding. Catalysis depends on glutamate 195, which acts as the Proton acceptor.

This sequence belongs to the PanB family. In terms of assembly, homodecamer; pentamer of dimers. The cofactor is Mg(2+).

It localises to the cytoplasm. It catalyses the reaction 3-methyl-2-oxobutanoate + (6R)-5,10-methylene-5,6,7,8-tetrahydrofolate + H2O = 2-dehydropantoate + (6S)-5,6,7,8-tetrahydrofolate. It participates in cofactor biosynthesis; (R)-pantothenate biosynthesis; (R)-pantoate from 3-methyl-2-oxobutanoate: step 1/2. Its function is as follows. Catalyzes the reversible reaction in which hydroxymethyl group from 5,10-methylenetetrahydrofolate is transferred onto alpha-ketoisovalerate to form ketopantoate. The chain is 3-methyl-2-oxobutanoate hydroxymethyltransferase from Chlorobaculum tepidum (strain ATCC 49652 / DSM 12025 / NBRC 103806 / TLS) (Chlorobium tepidum).